Here is a 193-residue protein sequence, read N- to C-terminus: Ribosome maturation factor RimM (193 aa).

Positions 112 to 193 (VDEYYWIDLI…CITVDWGLDF (82 aa)) constitute a PRC barrel domain.

Belongs to the RimM family. Binds ribosomal protein uS19.

The protein localises to the cytoplasm. Its function is as follows. An accessory protein needed during the final step in the assembly of 30S ribosomal subunit, possibly for assembly of the head region. Essential for efficient processing of 16S rRNA. May be needed both before and after RbfA during the maturation of 16S rRNA. It has affinity for free ribosomal 30S subunits but not for 70S ribosomes. This is Ribosome maturation factor RimM from Methylibium petroleiphilum (strain ATCC BAA-1232 / LMG 22953 / PM1).